A 273-amino-acid chain; its full sequence is 3-methyl-2-oxobutanoate hydroxymethyltransferase 2 (273 aa).

Mg(2+) is bound by residues Asp-50 and Asp-89. Residues 50-51 (DS), Asp-89, and Lys-119 contribute to the 3-methyl-2-oxobutanoate site. Glu-121 lines the Mg(2+) pocket. Catalysis depends on Glu-188, which acts as the Proton acceptor.

The protein belongs to the PanB family. As to quaternary structure, homodecamer; pentamer of dimers. It depends on Mg(2+) as a cofactor.

The protein resides in the cytoplasm. The catalysed reaction is 3-methyl-2-oxobutanoate + (6R)-5,10-methylene-5,6,7,8-tetrahydrofolate + H2O = 2-dehydropantoate + (6S)-5,6,7,8-tetrahydrofolate. The protein operates within cofactor biosynthesis; (R)-pantothenate biosynthesis; (R)-pantoate from 3-methyl-2-oxobutanoate: step 1/2. Its function is as follows. Catalyzes the reversible reaction in which hydroxymethyl group from 5,10-methylenetetrahydrofolate is transferred onto alpha-ketoisovalerate to form ketopantoate. This chain is 3-methyl-2-oxobutanoate hydroxymethyltransferase 2, found in Zymomonas mobilis subsp. mobilis (strain ATCC 31821 / ZM4 / CP4).